The sequence spans 1064 residues: Bifunctional cytochrome P450/NADPH--P450 reductase ascE (1064 aa).

The segment at 1-484 (MTELIPGPKG…LHGGAKKGSK (484 aa)) is cytochrome P450. Residue cysteine 411 coordinates heme. The segment at 485-1064 (IDGPSSGASL…ANRYVTEIFA (580 aa)) is NADPH-P-450 reductase. The Flavodoxin-like domain maps to 504 to 644 (MTILYGSDSG…DFERWQDDQL (141 aa)). FMN-binding positions include 510-514 (SDSGT) and 588-620 (VYGCGNKDYTSTFHRIPKLLDAEFERCGAKRIA). The FAD-binding FR-type domain occupies 676-905 (VDADEATVQS…KPALRLFHPP (230 aa)).

The protein in the N-terminal section; belongs to the cytochrome P450 family. Requires FAD as cofactor. FMN serves as cofactor. Heme is required as a cofactor.

The catalysed reaction is ilicicolin A + NADPH + O2 + H(+) = ilicicolin A epoxide + NADP(+) + H2O. It functions in the pathway secondary metabolite biosynthesis; terpenoid biosynthesis. In terms of biological role, bifunctional cytochrome P450/NADPH--P450 reductase; part of the asc-1 gene cluster that mediates the biosynthesis both ascochlorin and ascofuranone, a strong inhibitor of cyanide-insensitive alternative oxidases and a promising drug candidate against African trypanosomiasis. The first step in the pathway is performed by the non-reducing polyketide synthase ascC that produces orsellinic acid by condensing acetyl-CoA with 3 malonyl-CoA units. Orsellinic acid is then prenylated by the prenyltransferase ascA to yield ilicicolinic acid B. Ilicicolinic acid B is further reduced to ilicicolin B by the reductase ascB. The halogenase ascD then chlorinates ilicicolin B to produce ilicicolin A which is converted to ilicicolin A epoxide by the cytochrome P450 monooxygenase ascE that catalyzes stereoselective epoxidation of the terminal double bond of the prenyl group. Ilicicolin A epoxide is the last common precursor for the biosynthesis of ascofuranone and ascochlorin. The terpene cyclase ascF produces a monocyclic terpene, and the cyclization reaction is proposed to be initiated by protonation of the terminal epoxide of ilicicolin A epoxide to generate a monocyclic tertiarycation, which is followed by a series of hydride and methyl shifts with abstraction of proton, leading to the formation of the (14S,15R,19R)-trimethylcyclohexanone ring structure of ilicicolin C, which is finally reduced to ascochlorin by the dehydrogenase ascG. On the other hand, ilicicolin A epoxide is hydroxylated by the cytochrome P450 monooxygenase ascH, and the resultant product is cyclized by the terpene cyclase ascI to ascofuranol via protonation-initiated epoxide ring opening, which facilitates the 6-endo-tet cyclization to form the tetrahy-drofuran ring. Finally, ascofuranol is oxidized into ascofuranone by ascJ. In Acremonium egyptiacum (Oospora egyptiaca), this protein is Bifunctional cytochrome P450/NADPH--P450 reductase ascE.